The primary structure comprises 2876 residues: Nipped-B-like protein B (2876 aa).

Polar residues-rich tracts occupy residues 124–142 and 149–167; these read PQNS…TTIT and YVQT…QNSP. Disordered regions lie at residues 124-197, 246-367, 439-494, and 525-1017; these read PQNS…PIQQ, NDEG…SDAE, RESA…AGNK, and EGPV…FPNY. Positions 276 to 290 are enriched in pro residues; it reads GPRPPLILQSPPPYT. Over residues 439-457 the composition is skewed to basic and acidic residues; sequence RESAIERERCSKEVQDKDK. Residues 471-480 are compositionally biased toward low complexity; that stretch reads PGAAGTAGAS. The segment covering 481-490 has biased composition (gly residues); sequence GTPGVGGGCN. 3 stretches are compositionally biased toward basic and acidic residues: residues 556 to 577, 586 to 955, and 962 to 1005; these read SKTD…KQRV, VDGR…EQRS, and VKQE…HKPQ. Residues 1068 to 1081 carry the PxVxL motif motif; the sequence is NKGAKPVVVLKKLS. 2 disordered regions span residues 1088 to 1229 and 1724 to 1747; these read MISN…EPKL and TEKA…KDVE. Over residues 1090-1100 the composition is skewed to low complexity; that stretch reads SNSRSSKSSRS. Composition is skewed to basic and acidic residues over residues 1104–1119 and 1156–1183; these read RFRE…ERVK and KDRD…DSRR. Positions 1212-1223 are enriched in basic residues; sequence KLKKKEKQKKRK. HEAT repeat units lie at residues 1803-1841, 1879-1917, 1981-2020, 2203-2241, and 2349-2387; these read AQSF…VDPS, PQLT…EQPT, YDWF…HILK, VVIK…QDPG, and LIHP…KYTG. Disordered regions lie at residues 2516–2590 and 2728–2774; these read EVVK…DSDL and ALLG…GHRN. Over residues 2519 to 2537 the composition is skewed to basic residues; it reads KKKKKKKKKKKQKQKRGKK. The span at 2548–2563 shows a compositional bias: low complexity; that stretch reads RSSSSSSSSSSSSSDS. Residues 2762–2774 show a composition bias toward basic and acidic residues; it reads RTGDSAEASGHRN.

It belongs to the SCC2/Nipped-B family.

The protein resides in the nucleus. Its function is as follows. May play a structural role in chromatin. Involved in sister chromatid cohesion, possibly by facilitating the cohesin complex loading. Transcription factor, which may promote cortical neuron migration during brain development by regulating the transcription of crucial genes in this process. The protein is Nipped-B-like protein B (nipblb) of Danio rerio (Zebrafish).